The chain runs to 231 residues: Floral homeotic protein PMADS 1 (231 aa).

Residues 3–58 (RGKIQIKRIENQTNRQVTYSKRRNGLFKKANELTVLCDAKVSIIMISSTGKLHEFI) form the MADS-box domain. One can recognise a K-box domain in the interval 84-174 (YEKMQEQLRK…LLEFDARQED (91 aa)).

Predominantly expressed in petals and stamens, less in carpels and sepals.

Its subcellular location is the nucleus. Its function is as follows. Transcription factor involved in the genetic control of flower development. Necessary for the normal development of petals. Absence of the PMADS1 protein causes transformation of petals into sepals. The chain is Floral homeotic protein PMADS 1 (PMADS1) from Petunia hybrida (Petunia).